A 129-amino-acid polypeptide reads, in one-letter code: Protein PerB (129 aa).

In terms of biological role, positive regulatory protein of bfpA, the gene coding for the bundle-forming pilus of EPEC. The sequence is that of Protein PerB (perB) from Escherichia coli O111:H-.